The following is a 468-amino-acid chain: Cytochrome P450-like protein L532 (468 aa).

A run of 2 helical transmembrane segments spans residues 22–42 (WFAY…FGLI) and 172–192 (VTVL…GVDV). Residue cysteine 415 participates in heme binding.

Belongs to the cytochrome P450 family. Heme is required as a cofactor.

The protein resides in the host membrane. The protein localises to the virion. This Acanthamoeba polyphaga mimivirus (APMV) protein is Cytochrome P450-like protein L532.